An 826-amino-acid polypeptide reads, in one-letter code: Putative ankyrin repeat protein RBE_0220 (826 aa).

ANK repeat units follow at residues 308–337 (LGTSLLAVTVRNNNVELTKALLNKGADQHA), 342–371 (IDMSLLYIACLNKSVDIAKLLLEYNVDPNY), 375–404 (DNDTPLLQACEKKSPELVKALLAKNADPNK), 445–474 (NDFTPLILACYNNSERVVQALLDKEADVNA), 478–507 (DGFTPLFAAYRNHSTKITELLLEKGANPDV), 512–541 (TKSSILYNACNEGDLNIIKLLLKHKANPNL), 545–574 (DGTTPLMAACEKGDLEIAALLLKNGADINK), and 578–607 (NGDNALFLACKNGNLELVKMLVENGVDLKK).

This chain is Putative ankyrin repeat protein RBE_0220, found in Rickettsia bellii (strain RML369-C).